Consider the following 365-residue polypeptide: Palmitoyltransferase ZDHHC20 (365 aa).

Over 1 to 14 (MAPWTLWRCCQRVV) the chain is Cytoplasmic. A helical transmembrane segment spans residues 15–35 (GWVPVLFITFVVVWSYYAYVV). The Lumenal segment spans residues 36 to 53 (ELCVFTIFGNEENGKTVV). A helical transmembrane segment spans residues 54–74 (YLVAFHLFFVMFVWSYWMTIF). At 75 to 169 (TSPASPSKEF…NNCVGFSNYK (95 aa)) the chain is on the cytoplasmic side. Residues 126–176 (RYCEKCQLIKPDRAHHCSACDSCILKMDHHCPWVNNCVGFSNYKFFLLFLL) enclose the DHHC domain. Residues cysteine 128 and cysteine 131 each coordinate Zn(2+). Substrate is bound by residues lysine 135 and 140-143 (HHCS). Histidine 141, cysteine 142, cysteine 145, cysteine 148, and histidine 155 together coordinate Zn(2+). Residue cysteine 156 is the S-palmitoyl cysteine intermediate of the active site. Position 162 (cysteine 162) interacts with Zn(2+). The helical transmembrane segment at 170–190 (FFLLFLLYSLLYCLFVAATVL) threads the bilayer. Topologically, residues 191 to 207 (EYFIKFWTNELTDTRAK) are lumenal. A helical transmembrane segment spans residues 208-231 (FHVLFLFFVSAMFFISVLSLFSYH). At 232 to 365 (CWLVGKNRTT…NNHVTVAIEN (134 aa)) the chain is on the cytoplasmic side. 3 positions are modified to phosphoserine: serine 305, serine 330, and serine 339.

The protein belongs to the DHHC palmitoyltransferase family. Autopalmitoylated (in vitro).

It localises to the golgi apparatus membrane. Its subcellular location is the cell membrane. The protein resides in the cytoplasm. It is found in the perinuclear region. The protein localises to the endoplasmic reticulum membrane. It localises to the endoplasmic reticulum-Golgi intermediate compartment membrane. The enzyme catalyses L-cysteinyl-[protein] + hexadecanoyl-CoA = S-hexadecanoyl-L-cysteinyl-[protein] + CoA. It carries out the reaction L-cysteinyl-[protein] + tetradecanoyl-CoA = S-tetradecanoyl-L-cysteinyl-[protein] + CoA. The catalysed reaction is L-cysteinyl-[protein] + octadecanoyl-CoA = S-octadecanoyl-L-cysteinyl-[protein] + CoA. In terms of biological role, palmitoyltransferase that could catalyze the addition of palmitate onto various protein substrates. Catalyzes palmitoylation of Cys residues in the cytoplasmic C-terminus of EGFR, and modulates the duration of EGFR signaling by modulating palmitoylation-dependent EGFR internalization and degradation. Has a preference for acyl-CoA with C16 fatty acid chains. Can also utilize acyl-CoA with C14 and C18 fatty acid chains. May palmitoylate CALHM1 subunit of gustatory voltage-gated ion channels and modulate channel gating and kinetics. Functionally, (Microbial infection) Dominant palmitoyltransferase responsible for lipidation of SARS coronavirus-2/SARS-CoV-2 spike protein. Through a sequential action with ZDHHC9, rapidly and efficiently palmitoylates spike protein following its synthesis in the endoplasmic reticulum (ER). In the infected cell, promotes spike biogenesis by protecting it from premature ER degradation, increases half-life and controls the lipid organization of its immediate membrane environment. Once the virus has formed, spike palmitoylation controls fusion with the target cell. The sequence is that of Palmitoyltransferase ZDHHC20 from Homo sapiens (Human).